Here is a 140-residue protein sequence, read N- to C-terminus: Blasticidin-S deaminase (140 aa).

The 133-residue stretch at 8–140 (QQDLELVEVA…ELIPLKYTRN (133 aa)) folds into the CMP/dCMP-type deaminase domain. Residue cysteine 59 participates in Zn(2+) binding. The active-site Proton donor is the glutamate 61. Residues cysteine 100 and cysteine 103 each coordinate Zn(2+).

This sequence belongs to the cytidine and deoxycytidylate deaminase family. The cofactor is Zn(2+).

It catalyses the reaction blasticidin S + H2O + H(+) = deaminohydroxyblasticidin S + NH4(+). Its function is as follows. Catalyzes the deamination of the cytosine moiety of the antibiotics blasticidin S, cytomycin and acetylblasticidin S. This Bacillus cereus protein is Blasticidin-S deaminase (bsr).